Here is a 276-residue protein sequence, read N- to C-terminus: Malectin-A (276 aa).

The signal sequence occupies residues 1–26 (MLSIRTVLGPLATILLTVLGPFGAHG). Over 27–253 (SGLADKVIWA…TPNPYASDNS (227 aa)) the chain is Lumenal. Residues Tyr-67, Tyr-89, Tyr-116, Phe-117, and Asp-186 each contribute to the a carbohydrate site. Positions 204-247 (PMLQPHPGLEKKEEEEEEEEEEGSTSKKQINKNRVQSGPRTPNP) are disordered. The segment covering 216–226 (EEEEEEEEEEG) has biased composition (acidic residues). The span at 229-247 (SKKQINKNRVQSGPRTPNP) shows a compositional bias: polar residues. The N-linked (GlcNAc...) asparagine glycan is linked to Asn-252. A helical transmembrane segment spans residues 254 to 274 (SLMFPILVAFGVFIPTLFCLC). Over 275–276 (RL) the chain is Cytoplasmic.

This sequence belongs to the malectin family. As to expression, widely expressed throughout development including the anterior neuroectoderm and neural crest at stages 18 and 20, and the retina, hatching gland, otic vesicle, epibranchial placodes, pronephros and tail tip of later states. At stage 41, expressed in the liver, pancreas, branchial arches and proctodeum. Expressed broadly in adults in fat, intestine, gall bladder, eye, muscle, kidney, stomach, liver, heart, pancreas and lung.

The protein localises to the endoplasmic reticulum membrane. In terms of biological role, carbohydrate-binding protein with a strong ligand preference for Glc2-N-glycan. May play a role in the early steps of protein N-glycosylation. Can bind di- or higher oligomers but not monomers of glucose, including maltose, maltotriose, maltotetraose, maltoheptaose, nigerose, kojibose, cellobiose and isomaltose, although based on their subcellular locations, these are unlikely to all be physiological ligands. The protein is Malectin-A of Xenopus laevis (African clawed frog).